Reading from the N-terminus, the 368-residue chain is Putative alcohol dehydrogenase D (368 aa).

Zn(2+) is bound by residues Cys40, His61, Cys91, Cys94, Cys97, Cys105, and Cys167.

The protein belongs to the zinc-containing alcohol dehydrogenase family. It depends on Zn(2+) as a cofactor.

The enzyme catalyses a primary alcohol + NAD(+) = an aldehyde + NADH + H(+). It catalyses the reaction a secondary alcohol + NAD(+) = a ketone + NADH + H(+). Its function is as follows. Required for maintaining the appropriate mycolic acid composition and permeability of the envelope on its exposure to acidic pH. The chain is Putative alcohol dehydrogenase D (adhD) from Mycobacterium tuberculosis (strain CDC 1551 / Oshkosh).